We begin with the raw amino-acid sequence, 346 residues long: Putative D-threonate 4-phosphate dehydrogenase (346 aa).

Substrate is bound by residues His141 and Thr142. A divalent metal cation is bound by residues His171, His215, and His270. Residues Lys278 and Arg296 each contribute to the substrate site.

Belongs to the PdxA family. PdxA2 subfamily. As to quaternary structure, homodimer. It depends on a divalent metal cation as a cofactor.

The catalysed reaction is 4-O-phospho-D-threonate + NAD(+) = dihydroxyacetone phosphate + CO2 + NADH. In terms of biological role, catalyzes the NAD-dependent oxidation and subsequent decarboxylation of D-threonate 4-phosphate to produce dihydroxyacetone phosphate (DHAP). The polypeptide is Putative D-threonate 4-phosphate dehydrogenase (Cutibacterium acnes (strain DSM 16379 / KPA171202) (Propionibacterium acnes)).